We begin with the raw amino-acid sequence, 1179 residues long: Protein turtle homolog A (1179 aa).

A signal peptide spans 1–20 (MIWCLRLTVLSLIISQGADG). At 21–734 (RRKPEVVSVV…TQLPGLLPQP (714 aa)) the chain is on the extracellular side. 5 Ig-like domains span residues 24–124 (PEVV…DFAN), 136–216 (PQFQ…GSIT), 226–318 (PPVI…AYLT), 322–410 (PAQV…SPVT), and 418–502 (PAFI…TNVY). Intrachain disulfides connect cysteine 41/cysteine 108 and cysteine 158/cysteine 206. N-linked (GlcNAc...) asparagine glycans are attached at residues asparagine 188, asparagine 239, and asparagine 256. 3 disulfides stabilise this stretch: cysteine 248-cysteine 301, cysteine 344-cysteine 395, and cysteine 440-cysteine 486. Fibronectin type-III domains are found at residues 507-611 (SPHV…TTPA) and 623-718 (PLSP…TSGL). 2 N-linked (GlcNAc...) asparagine glycosylation sites follow: asparagine 513 and asparagine 524. Residues 735 to 755 (VLAGVVGGVCFLGVAVLVSIL) traverse the membrane as a helical segment. The Cytoplasmic segment spans residues 756 to 1179 (AACLMNRRRA…ISYPEQATLL (424 aa)). The interval 767-807 (RRHRKRLRQDPPLIFSPRGKSGSHSAPGSGSPDSVTKFKLQ) is disordered. A compositionally biased stretch (low complexity) spans 785–800 (GKSGSHSAPGSGSPDS). At serine 809 the chain carries Phosphoserine. Disordered regions lie at residues 819-842 (LWGE…PLPL), 942-974 (PPLE…DSPP), and 1016-1079 (APRG…KRRN). Positions 944–954 (LEEPTPAPPPD) are enriched in pro residues. Residues 1020 to 1029 (SLTSQSSGRG) show a composition bias toward polar residues. Positions 1177–1179 (TLL) match the PDZ-binding motif.

This sequence belongs to the immunoglobulin superfamily. Turtle family. As to quaternary structure, interacts with MAGI2 and SHANK1. As to expression, expressed in both cell bodies and dendrites of cortical and hippocampal neurons and also cerebellar Purkinje cells (at protein level).

Its subcellular location is the cell membrane. The protein localises to the synapse. Functions in dendrite outgrowth and synapse maturation. This is Protein turtle homolog A (Igsf9) from Mus musculus (Mouse).